A 1220-amino-acid polypeptide reads, in one-letter code: Protein patched homolog 1 (1220 aa).

A disordered region spans residues 1–27 (MASDPRDPGPAGGVFGDLPPSYTRSPP). At 1–84 (MASDPRDPGP…GCHIQRHCGK (84 aa)) the chain is on the cytoplasmic side. A helical membrane pass occupies residues 85–105 (VLFIGLLVFGALSVGLRVAAI). The Extracellular portion of the chain corresponds to 106–419 (ETDIEKLWVE…LNDIMKSFSD (314 aa)). N397 is a glycosylation site (N-linked (GlcNAc...) asparagine). Residues 420–440 (VSVIRVAGGYLLMLAYACVTM) traverse the membrane as a helical segment. The SSD domain maps to 421–579 (SVIRVAGGYL…LLIFPAILSL (159 aa)). Topologically, residues 441 to 449 (LRWDCAKSQ) are cytoplasmic. Residues 450 to 470 (GAVGLAGVLLVALSVAAGLGL) traverse the membrane as a helical segment. Residues 471 to 484 (CSLLGLSFNAATTQ) are Extracellular-facing. Residues 485-505 (VLPSLALGIGVDDMFLLGHSF) traverse the membrane as a helical segment. At 506–528 (TETRSNIPFKERTGDCLRRTGTS) the chain is on the cytoplasmic side. The helical transmembrane segment at 529-549 (VALTSVNNMIAFFMAALVPIP) threads the bilayer. Topologically, residues 550–558 (ALRAFSLQA) are extracellular. The chain crosses the membrane as a helical span at residues 559 to 579 (AVVVVFNFAMALLIFPAILSL). The Cytoplasmic portion of the chain corresponds to 580–739 (DLHRREDKRL…APLLLKPETK (160 aa)). A helical membrane pass occupies residues 740 to 760 (TVVVVVFVALLSLSLYGTTMV). Over 761 to 1016 (HDGLYLTDIV…WEQYIGLRHW (256 aa)) the chain is Extracellular. 2 N-linked (GlcNAc...) asparagine glycosylation sites follow: N865 and N888. Residues 1017–1037 (FLLSISVVLACTFLVCAILLL) form a helical membrane-spanning segment. Residues 1038-1044 (NPWTAGV) lie on the Cytoplasmic side of the membrane. The helical transmembrane segment at 1045 to 1065 (IVFILPMMTVELFGIMGLIGI) threads the bilayer. The Extracellular segment spans residues 1066 to 1072 (KLSAIPV). The chain crosses the membrane as a helical span at residues 1073–1093 (VILIASVGIGVEFTVHIALGF). At 1094 to 1110 (LTAIGDRNTRSAVAMEH) the chain is on the cytoplasmic side. Residues 1111-1131 (MFAPVIDGAISTLLGVLMLAG) traverse the membrane as a helical segment. The Extracellular portion of the chain corresponds to 1132–1143 (SEFDFIMRYFFA). The chain crosses the membrane as a helical span at residues 1144 to 1164 (VLAILTLLGILNGLVLLPVLL). Residues 1165–1220 (SLMGPPAEVVPANNANHLQSPSPEPMPPPMNHHGYYAGHIPKASHQAFSETSDSEY) are Cytoplasmic-facing.

This sequence belongs to the patched family. In terms of processing, glycosylation is necessary for SHH binding. Detected in embryonic presomitic mesoderm, neuroectoderm, tissue surrounding the notochord, ventral neural tube.

The protein resides in the membrane. Acts as a receptor for sonic hedgehog (SHH), indian hedgehog (IHH) and desert hedgehog (DHH). Associates with the smoothened protein (SMO) to transduce the hedgehog's proteins signal. The polypeptide is Protein patched homolog 1 (ptch1) (Danio rerio (Zebrafish)).